A 162-amino-acid chain; its full sequence is Regulator of sigma D (162 aa).

It belongs to the Rsd/AlgQ family. As to quaternary structure, interacts with RpoD.

It is found in the cytoplasm. In terms of biological role, binds RpoD and negatively regulates RpoD-mediated transcription activation by preventing the interaction between the primary sigma factor RpoD with the catalytic core of the RNA polymerase and with promoter DNA. May be involved in replacement of the RNA polymerase sigma subunit from RpoD to RpoS during the transition from exponential growth to the stationary phase. The sequence is that of Regulator of sigma D from Salmonella paratyphi A (strain ATCC 9150 / SARB42).